The sequence spans 77 residues: Small ribosomal subunit protein bS18 (77 aa).

It belongs to the bacterial ribosomal protein bS18 family. In terms of assembly, part of the 30S ribosomal subunit. Forms a tight heterodimer with protein bS6.

Binds as a heterodimer with protein bS6 to the central domain of the 16S rRNA, where it helps stabilize the platform of the 30S subunit. The polypeptide is Small ribosomal subunit protein bS18 (Lactobacillus gasseri (strain ATCC 33323 / DSM 20243 / BCRC 14619 / CIP 102991 / JCM 1131 / KCTC 3163 / NCIMB 11718 / NCTC 13722 / AM63)).